Consider the following 145-residue polypeptide: UPF0735 ACT domain-containing protein CPE1414 (145 aa).

Positions 69–144 (IFNMVVTHEK…GVEKVEFVAM (76 aa)) constitute an ACT domain.

The protein belongs to the UPF0735 family.

The protein is UPF0735 ACT domain-containing protein CPE1414 of Clostridium perfringens (strain 13 / Type A).